Here is a 546-residue protein sequence, read N- to C-terminus: MVSSSVSILGTSAKASTSLSRKDEIKLTPETREASLDIPYKPIIAYWTVMGLCLMIAFGGFIFGWDTGTISGFINQTDFKRRFGELQRDGSFQLSDVRTGLIVGIFNIGCALGGLTLGRLGDIYGRKIGLMCVILVYVVGIVIQIASSDKWYQYFIGRIVSGMGVGGVAVLSPTLISEISPKHLRGTCVSFYQLMITLGIFLGYCTNYGTKKYSNSIQWRVPLGLCFAWAIFMVIGMVMVPESPRYLVEKGKYEEARRSLAKSNKVTVTDPGVVFEFDTIVANMELERAVGNASWHELFSNKGAILPRVIMGIVIQSLQQLTGCNYFFYYGTTIFNAVGMQDSFETSIVLGAVNFASTFVALYIVDKFGRRKCLLWGSASMAICFVIFATVGVTRLWPQGKDQPSSQSAGNVMIVFTCFFIFSFAITWAPIAYVIVAETYPLRVKNRAMAIAVGANWMWGFLIGFFTPFITRSIGFSYGYVFMGCLIFSYFYVFFFVCETKGLTLEEVNEMYEERIKPWKSGGWIPSSRRTPQPTSSTPLVIVDSK.

Topologically, residues 1–44 are cytoplasmic; that stretch reads MVSSSVSILGTSAKASTSLSRKDEIKLTPETREASLDIPYKPII. A helical membrane pass occupies residues 45–65; that stretch reads AYWTVMGLCLMIAFGGFIFGW. Over 66–100 the chain is Extracellular; that stretch reads DTGTISGFINQTDFKRRFGELQRDGSFQLSDVRTG. N-linked (GlcNAc...) asparagine glycosylation occurs at asparagine 75. Residues 101–121 traverse the membrane as a helical segment; that stretch reads LIVGIFNIGCALGGLTLGRLG. Over 122-127 the chain is Cytoplasmic; that stretch reads DIYGRK. A helical transmembrane segment spans residues 128-148; that stretch reads IGLMCVILVYVVGIVIQIASS. The Extracellular portion of the chain corresponds to 149–158; that stretch reads DKWYQYFIGR. Residues 159-179 traverse the membrane as a helical segment; that stretch reads IVSGMGVGGVAVLSPTLISEI. At 180–185 the chain is on the cytoplasmic side; it reads SPKHLR. Residues 186-206 form a helical membrane-spanning segment; sequence GTCVSFYQLMITLGIFLGYCT. Residues 207 to 220 lie on the Extracellular side of the membrane; sequence NYGTKKYSNSIQWR. The chain crosses the membrane as a helical span at residues 221-241; it reads VPLGLCFAWAIFMVIGMVMVP. The Cytoplasmic portion of the chain corresponds to 242-324; sequence ESPRYLVEKG…IQSLQQLTGC (83 aa). The helical transmembrane segment at 325–341 threads the bilayer; the sequence is NYFFYYGTTIFNAVGMQ. Topologically, residues 342–347 are extracellular; the sequence is DSFETS. The chain crosses the membrane as a helical span at residues 348–365; it reads IVLGAVNFASTFVALYIV. The Cytoplasmic segment spans residues 366–372; the sequence is DKFGRRK. The chain crosses the membrane as a helical span at residues 373–393; that stretch reads CLLWGSASMAICFVIFATVGV. The Extracellular segment spans residues 394–415; that stretch reads TRLWPQGKDQPSSQSAGNVMIV. The chain crosses the membrane as a helical span at residues 416-436; sequence FTCFFIFSFAITWAPIAYVIV. The Cytoplasmic segment spans residues 437–453; it reads AETYPLRVKNRAMAIAV. The helical transmembrane segment at 454-474 threads the bilayer; the sequence is GANWMWGFLIGFFTPFITRSI. Residue glycine 475 is a topological domain, extracellular. Residues 476–496 traverse the membrane as a helical segment; the sequence is FSYGYVFMGCLIFSYFYVFFF. Residues 497-546 lie on the Cytoplasmic side of the membrane; sequence VCETKGLTLEEVNEMYEERIKPWKSGGWIPSSRRTPQPTSSTPLVIVDSK.

The protein belongs to the major facilitator superfamily. Sugar transporter (TC 2.A.1.1) family.

It is found in the membrane. In terms of biological role, probable glucose transporter. This is Hexose transporter HXT10 (HXT10) from Saccharomyces cerevisiae (strain ATCC 204508 / S288c) (Baker's yeast).